A 552-amino-acid chain; its full sequence is MFEGLSPLARDARSWPFEQARATIARVLRVRLPDRADQDAAKALIDAGKTDEAVKAYPALAKAVIFETGYGPSGLPHLGTFGEVARTTMVRQAFRALTDEAIPTRLIAFSDDMDGLRKVPDNIENKQPLIEDLGKPLTVVRDPFGTHDSFGAHNNARLRAFLDGFGFEYEFVSSTDCYKGGLFDATLLTALERFDAIQKVMLPTLGEERRATYSPFLPISPSTGKVLQVPTLERNVEKGTIVFEDEDGSKVEVPVTGGHVKMQWKPDWAMRWTALGVDYEMSGKDLIDSVKASGAICKALGGVPPEGFNYELFLDENNQKISKSKGNGLSMEDWLRYGAPESLSYYMFQSPKSAKKLYFDVIPKASDEYLQQLDGFGRQEPAKQLDNPVWHIHGGKPPQQGSPVSFSLMLNLVSAADASTKEILWGFLSRYIPGASPETQPLLDRLAGYAINYYEDFVKPSKVFRAPSDQERAAMLDLLAKLKAMPAGTQDAELIQNEVFEVGKTHGFDPLRAWFQALYEVLLGQSQGPRFGSFAAIFGIDRTVALIEEKLG.

The 'HIGH' region signature appears at 72–80 (PSGLPHLGT). The 'KMSKS' region signature appears at 320–324 (KISKS). Residue lysine 323 participates in ATP binding.

The protein belongs to the class-I aminoacyl-tRNA synthetase family.

The protein localises to the cytoplasm. The catalysed reaction is tRNA(Lys) + L-lysine + ATP = L-lysyl-tRNA(Lys) + AMP + diphosphate. This Caulobacter vibrioides (strain ATCC 19089 / CIP 103742 / CB 15) (Caulobacter crescentus) protein is Lysine--tRNA ligase.